We begin with the raw amino-acid sequence, 120 residues long: U13-lycotoxin-Ls1a (120 aa).

A signal peptide spans methionine 1 to cysteine 16. Residues phenylalanine 17–arginine 54 constitute a propeptide that is removed on maturation. Intrachain disulfides connect cysteine 56–cysteine 70, cysteine 63–cysteine 76, cysteine 69–cysteine 87, and cysteine 78–cysteine 85. The region spanning cysteine 56–cysteine 95 is the Agouti domain.

Belongs to the neurotoxin 05 (agouti) family. Contains 6 disulfide bonds. In terms of tissue distribution, expressed by the venom gland.

Its subcellular location is the secreted. The chain is U13-lycotoxin-Ls1a from Lycosa singoriensis (Wolf spider).